A 485-amino-acid polypeptide reads, in one-letter code: Protein disulfide-isomerase 1 (485 aa).

An N-terminal signal peptide occupies residues 1-20 (MSLSVSFIFLLVASIGAVVA). Thioredoxin domains follow at residues 21–130 (DSEN…KKSG) and 342–470 (YLEG…KYAG). 2 disulfides stabilise this stretch: Cys-52-Cys-55 and Cys-393-Cys-396. Active-site nucleophile residues include Cys-393 and Cys-396. Residues 482 to 485 (HEEL) carry the Prevents secretion from ER motif.

Belongs to the protein disulfide isomerase family.

The protein localises to the endoplasmic reticulum lumen. It carries out the reaction Catalyzes the rearrangement of -S-S- bonds in proteins.. This Caenorhabditis elegans protein is Protein disulfide-isomerase 1 (pdi-1).